Reading from the N-terminus, the 1217-residue chain is Disease resistance protein RPS4 (1217 aa).

In terms of domain architecture, TIR spans 14–175; that stretch reads PQHQVFINFR…EIVKAVKTAL (162 aa). 23-28 lines the NAD(+) pocket; the sequence is RGADLR. The interval 33-34 is important for interaction with RRS1; the sequence is SH. Glu88 is an active-site residue. The region spanning 211-472 is the NB-ARC domain; sequence EQRLKDLEEK…FRSQDKDYVE (262 aa). LRR repeat units lie at residues 581 to 606, 614 to 636, 637 to 659, 682 to 706, 708 to 728, 729 to 749, 750 to 774, 796 to 818, 819 to 842, 843 to 860, and 861 to 887; these read MGNLRYLKFYNSHCPQECKTNNKINI, LKEVRCLHWLKFPLETLPNDFNP, INLVDLKLPYSEMEQLWEGDKDT, AEKLQRLNLEGCTTLKAFPHDMKKM, MLAFLNLKGCTSLESLPEMNL, ISLKTLTLSGCSTFKEFPLIS, DNIETLYLDGTAISQLPMNMEKLQR, LKALQELILSDCLNLKIFPEIDI, SFLNILLLDGTAIEVMPQLPSVQY, LCLSRNAKISCLPVGISQ, and LSQLKWLDLKYCTSLTSVPEFPPNLQC. The disordered stretch occupies residues 1161 to 1195; sequence TTEGVDGRVNKKKKTRMDNGRPKKKQRSGRDDNQT. The short motif at 1170–1177 is the Nuclear localization signal element; the sequence is NKKKKTRM.

It belongs to the disease resistance TIR-NB-LRR family. In terms of assembly, interacts with EDS1. Interacts with SRFR1. Interacts with RRS1.

The protein resides in the endomembrane system. The protein localises to the cytoplasm. It is found in the nucleus. It catalyses the reaction NAD(+) + H2O = ADP-D-ribose + nicotinamide + H(+). Its function is as follows. Disease resistance (R) protein that specifically recognizes the AvrRps4 type III effector avirulence protein from P.syringae. Resistance proteins guard the plant against pathogens that contain an appropriate avirulence protein via an indirect interaction with this avirulence protein. That triggers a defense system including the hypersensitive response, which restricts the pathogen growth. Probably acts as a NAD(+) hydrolase (NADase): in response to activation, catalyzes cleavage of NAD(+) into ADP-D-ribose (ADPR) and nicotinamide; NAD(+) cleavage triggering a defense system that promotes cell death. The combined presence of both regular and alternative RPS4 transcripts with truncated open reading frames (ORFs) is necessary for function. RPS4 function is regulated at multiple levels, including gene expression, alternative splicing, and protein stability. When over-expressed, confers temperature-conditioned EDS1-dependent auto-immunity. Heterodimerization with RRS1 is required to form a functional complex to recognize AvrRps4 and PopP2. Abscisic acid deficiency enhances nuclear accumulation of RPS4 and its cell death-inducing activity. The chain is Disease resistance protein RPS4 from Arabidopsis thaliana (Mouse-ear cress).